Here is a 316-residue protein sequence, read N- to C-terminus: Ribose-phosphate pyrophosphokinase (316 aa).

Residues 37–39 (DGE) and 96–97 (RQ) each bind ATP. Mg(2+)-binding residues include histidine 131 and aspartate 171. The active site involves lysine 195. Residues arginine 197, aspartate 221, and 225-229 (DTGGT) contribute to the D-ribose 5-phosphate site.

Belongs to the ribose-phosphate pyrophosphokinase family. Class I subfamily. In terms of assembly, homohexamer. Requires Mg(2+) as cofactor.

The protein localises to the cytoplasm. It catalyses the reaction D-ribose 5-phosphate + ATP = 5-phospho-alpha-D-ribose 1-diphosphate + AMP + H(+). It functions in the pathway metabolic intermediate biosynthesis; 5-phospho-alpha-D-ribose 1-diphosphate biosynthesis; 5-phospho-alpha-D-ribose 1-diphosphate from D-ribose 5-phosphate (route I): step 1/1. Involved in the biosynthesis of the central metabolite phospho-alpha-D-ribosyl-1-pyrophosphate (PRPP) via the transfer of pyrophosphoryl group from ATP to 1-hydroxyl of ribose-5-phosphate (Rib-5-P). The sequence is that of Ribose-phosphate pyrophosphokinase from Haemophilus ducreyi (strain 35000HP / ATCC 700724).